A 433-amino-acid chain; its full sequence is Chitinase-like protein EN03 (433 aa).

A signal peptide spans 1 to 16 (MKLFIALVGLLALAKA). A GH18 domain is found at 23 to 433 (SKVLCYYDSR…PILRAAKYRL (411 aa)). A disulfide bond links Cys27 and Cys54. An N-linked (GlcNAc...) asparagine glycan is attached at Asn220. The cysteines at positions 337 and 418 are disulfide-linked.

Belongs to the glycosyl hydrolase 18 family. IDGF subfamily.

The protein resides in the secreted. The protein is Chitinase-like protein EN03 of Bombyx mori (Silk moth).